A 246-amino-acid chain; its full sequence is C-X-C motif chemokine 16 (246 aa).

The N-terminal stretch at 1 to 26 is a signal peptide; sequence MRRGFGPLSLAFFLFLLALLTLPGDG. Over 27–201 the chain is Extracellular; that stretch reads NQGSVAGSCS…PGAGASTPAW (175 aa). 2 disulfides stabilise this stretch: cysteine 35–cysteine 65 and cysteine 37–cysteine 79. Disordered stretches follow at residues 104 to 150 and 175 to 198; these read GKSF…SGAL and PEAE…GAST. Polar residues predominate over residues 128–146; that stretch reads PSDTSTPAHSQSTQHSTLP. Residues 175–189 are compositionally biased toward basic and acidic residues; it reads PEAEANEKQQDDRQQ. The chain crosses the membrane as a helical span at residues 202–222; the sequence is VPVLSLLAIVFFLTAAMAYVL. At 223 to 246 the chain is on the cytoplasmic side; the sequence is CNRRATQQNSAGLQLWYTPVEPRP.

It belongs to the intercrine alpha (chemokine CxC) family. In terms of processing, glycosylated. Widely expressed. Not detected in purified B- and T-cells.

The protein localises to the membrane. Functionally, induces a strong chemotactic response. Induces calcium mobilization. Binds to CXCR6/Bonzo. Also acts as a scavenger receptor on macrophages, which specifically binds to OxLDL (oxidized low density lipoprotein), suggesting that it may be involved in pathophysiology such as atherogenesis. This chain is C-X-C motif chemokine 16 (Cxcl16), found in Mus musculus (Mouse).